Here is a 27-residue protein sequence, read N- to C-terminus: NADH-ubiquinone oxidoreductase chain 1 (27 aa).

Residues 3-23 traverse the membrane as a helical segment; that stretch reads LIFPLVGSLLLVICVMVGVAF.

Belongs to the complex I subunit 1 family.

The protein resides in the mitochondrion inner membrane. It carries out the reaction a ubiquinone + NADH + 5 H(+)(in) = a ubiquinol + NAD(+) + 4 H(+)(out). Its function is as follows. Core subunit of the mitochondrial membrane respiratory chain NADH dehydrogenase (Complex I) that is believed to belong to the minimal assembly required for catalysis. Complex I functions in the transfer of electrons from NADH to the respiratory chain. The immediate electron acceptor for the enzyme is believed to be ubiquinone. This is NADH-ubiquinone oxidoreductase chain 1 (ND1) from Simulium vittatum (Striped black fly).